The following is a 309-amino-acid chain: Taste receptor type 2 member 64 (309 aa).

The Extracellular portion of the chain corresponds to 1 to 3 (MVY). Residues 4–26 (FLLIILSILVVFAFVLGNFSNGF) form a helical membrane-spanning segment. The Cytoplasmic portion of the chain corresponds to 27 to 46 (VALVNVIDWVKTRKISSADQ). Residues 47–69 (ILTALVVSRIGLLWVILFHWYAN) traverse the membrane as a helical segment. Residues 70 to 83 (VFNSALYSSEVGAV) lie on the Extracellular side of the membrane. The helical transmembrane segment at 84 to 106 (ASNISAIINHFSIWLAASLGIFY) threads the bilayer. The Cytoplasmic segment spans residues 107–126 (LLKIANFSNLIFLHLKKRIR). The chain crosses the membrane as a helical span at residues 127–149 (SVVLVILLGPLVFLICNLAVITM). Topologically, residues 150–176 (DERVWTKEYEGNVTWKIKLRNAIHLSD) are extracellular. N-linked (GlcNAc...) asparagine glycosylation is present at Asn161. Residues 177-199 (LTVSTLANLIPFILTLICFLLLI) traverse the membrane as a helical segment. At 200–230 (CSLHKHLKKMQLHGKGSQDLSTKVHIKALQT) the chain is on the cytoplasmic side. Residues 231 to 253 (VISFLMLYAIYFLYLITLTWNLW) form a helical membrane-spanning segment. Topologically, residues 254-258 (TQQNK) are extracellular. A helical transmembrane segment spans residues 259 to 281 (LVFLLCQTLGIMYPSFHSFFLIM). Topologically, residues 282–309 (GSRKLKQTFLSVLCQVTCLVKGQQPSTP) are cytoplasmic.

The protein belongs to the G-protein coupled receptor T2R family.

The protein localises to the membrane. Receptor that may play a role in the perception of bitterness and is gustducin-linked. May play a role in sensing the chemical composition of the gastrointestinal content. The activity of this receptor may stimulate alpha gustducin, mediate PLC-beta-2 activation and lead to the gating of TRPM5. The sequence is that of Taste receptor type 2 member 64 (TAS2R64) from Pan paniscus (Pygmy chimpanzee).